Reading from the N-terminus, the 118-residue chain is Large ribosomal subunit protein bL20 (118 aa).

It belongs to the bacterial ribosomal protein bL20 family.

Binds directly to 23S ribosomal RNA and is necessary for the in vitro assembly process of the 50S ribosomal subunit. It is not involved in the protein synthesizing functions of that subunit. The polypeptide is Large ribosomal subunit protein bL20 (Cupriavidus metallidurans (strain ATCC 43123 / DSM 2839 / NBRC 102507 / CH34) (Ralstonia metallidurans)).